Here is a 602-residue protein sequence, read N- to C-terminus: Elongation factor 4 (602 aa).

The region spanning 7–188 is the tr-type G domain; it reads ENIRNFSIIA…SIIRLVPPPK (182 aa). GTP contacts are provided by residues 19 to 24 and 135 to 138; these read DHGKST and NKID.

The protein belongs to the TRAFAC class translation factor GTPase superfamily. Classic translation factor GTPase family. LepA subfamily.

It localises to the cell inner membrane. It catalyses the reaction GTP + H2O = GDP + phosphate + H(+). Its function is as follows. Required for accurate and efficient protein synthesis under certain stress conditions. May act as a fidelity factor of the translation reaction, by catalyzing a one-codon backward translocation of tRNAs on improperly translocated ribosomes. Back-translocation proceeds from a post-translocation (POST) complex to a pre-translocation (PRE) complex, thus giving elongation factor G a second chance to translocate the tRNAs correctly. Binds to ribosomes in a GTP-dependent manner. The chain is Elongation factor 4 from Chlamydia trachomatis serovar A (strain ATCC VR-571B / DSM 19440 / HAR-13).